A 579-amino-acid polypeptide reads, in one-letter code: MQQQTSADMNLLWGQLILEELARLGVKHVCMAPGSRSTPLTLAAASQTQLTRHIHFDERGLGFMALGLAKASNAPVAIITTSGTAVANLYPAIVEAWLTHVPLIILSGDRPPELIDCGANQAIIQPAIFAQYAKQVNLPTPDLGYPANALLSTIDHALANQHQPVHINCMYREPLYPTELVTLAHVKKTASVTTSTYLAPLNQWFENTKPLTRYASLTSAELPTTDTLMRFVHGKGVIVVGTLAPEDNPQQIVALAQKLGWPVLVDAQSQLRQHPGVIGHVDQLLLNPKANKQLEQAERILVFGGRFISKRLLQYIAQQSWHSYWHVVKHGDRLDPTHQSKEFYQASVQAVCQLPWPRSSQANWALQLLPLNESLESLFKQQIDNTTFGEAQVVRAIALAQSDQHILFIGNSLPIRLYDMYAPIATNTPAIYTNRGASGIDGLIATACGVAADKNAPTTLVMGDLSCLHDFNSLALLKQMTQPFVLVIINNDGGNIFNLLPVPNESLRNDFYRLSHGLEFGYGAAMFGLAYRQADDIESFNQAYQEAFEFNCASVIEVNVSPTQASDQITQISQWVKQH.

This sequence belongs to the TPP enzyme family. MenD subfamily. As to quaternary structure, homodimer. Mg(2+) is required as a cofactor. It depends on Mn(2+) as a cofactor. The cofactor is thiamine diphosphate.

The enzyme catalyses isochorismate + 2-oxoglutarate + H(+) = 5-enolpyruvoyl-6-hydroxy-2-succinyl-cyclohex-3-ene-1-carboxylate + CO2. The protein operates within quinol/quinone metabolism; 1,4-dihydroxy-2-naphthoate biosynthesis; 1,4-dihydroxy-2-naphthoate from chorismate: step 2/7. Its pathway is quinol/quinone metabolism; menaquinone biosynthesis. Functionally, catalyzes the thiamine diphosphate-dependent decarboxylation of 2-oxoglutarate and the subsequent addition of the resulting succinic semialdehyde-thiamine pyrophosphate anion to isochorismate to yield 2-succinyl-5-enolpyruvyl-6-hydroxy-3-cyclohexene-1-carboxylate (SEPHCHC). In Shewanella frigidimarina (strain NCIMB 400), this protein is 2-succinyl-5-enolpyruvyl-6-hydroxy-3-cyclohexene-1-carboxylate synthase.